The primary structure comprises 426 residues: tRNA (guanine(37)-N(1))-methyltransferase (426 aa).

S-adenosyl-L-methionine contacts are provided by residues H203, 242-243 (DL), 269-270 (DA), and N292. The tract at residues 374–426 (RISFKMPTLKKRKDTENNDDQENNNNSSNNNNNNKIDYNEAVSSGGEGKKIKH) is disordered. Residues 396–407 (NNNNSSNNNNNN) are compositionally biased toward low complexity.

This sequence belongs to the class I-like SAM-binding methyltransferase superfamily. TRM5/TYW2 family. As to quaternary structure, monomer.

Its subcellular location is the mitochondrion matrix. It is found in the nucleus. The protein resides in the cytoplasm. It catalyses the reaction guanosine(37) in tRNA + S-adenosyl-L-methionine = N(1)-methylguanosine(37) in tRNA + S-adenosyl-L-homocysteine + H(+). Functionally, specifically methylates the N1 position of guanosine-37 in various cytoplasmic and mitochondrial tRNAs. Methylation is not dependent on the nature of the nucleoside 5' of the target nucleoside. This is the first step in the biosynthesis of wybutosine (yW), a modified base adjacent to the anticodon of tRNAs and required for accurate decoding. The protein is tRNA (guanine(37)-N(1))-methyltransferase (trmt5) of Heterostelium pallidum (strain ATCC 26659 / Pp 5 / PN500) (Cellular slime mold).